The sequence spans 239 residues: uncharacterized protein (239 aa).

Residues M1–A23 form the signal peptide. Basic and acidic residues predominate over residues A220 to R230. A disordered region spans residues A220–K239.

This is an uncharacterized protein from Sinorhizobium fredii (strain NBRC 101917 / NGR234).